Here is a 56-residue protein sequence, read N- to C-terminus: UPF0391 membrane protein Noc_0484 (56 aa).

2 consecutive transmembrane segments (helical) span residues 6–26 (VTFLIVALVAALLGFTGIAGI) and 29–49 (EIAWILFVVGIILFVVFLVLG).

The protein belongs to the UPF0391 family.

Its subcellular location is the cell membrane. This chain is UPF0391 membrane protein Noc_0484, found in Nitrosococcus oceani (strain ATCC 19707 / BCRC 17464 / JCM 30415 / NCIMB 11848 / C-107).